A 473-amino-acid polypeptide reads, in one-letter code: Photosystem II CP43 reaction center protein (473 aa).

Residues 1–14 constitute a propeptide that is removed on maturation; that stretch reads MKTLYSLRRFYHVE. Thr-15 carries the N-acetylthreonine modification. Thr-15 carries the phosphothreonine modification. A run of 5 helical transmembrane segments spans residues 69–93, 134–155, 178–200, 255–275, and 291–312; these read LFEV…PHLA, LLGP…KDRN, KALY…RKIT, KPFA…LSYS, and WFNN…ASQA. Residue Glu-367 coordinates [CaMn4O5] cluster. The helical transmembrane segment at 447-471 threads the bilayer; that stretch reads RARAAAAGFEKGIDRDFEPVLSMTP.

Belongs to the PsbB/PsbC family. PsbC subfamily. As to quaternary structure, PSII is composed of 1 copy each of membrane proteins PsbA, PsbB, PsbC, PsbD, PsbE, PsbF, PsbH, PsbI, PsbJ, PsbK, PsbL, PsbM, PsbT, PsbX, PsbY, PsbZ, Psb30/Ycf12, at least 3 peripheral proteins of the oxygen-evolving complex and a large number of cofactors. It forms dimeric complexes. Requires Binds multiple chlorophylls and provides some of the ligands for the Ca-4Mn-5O cluster of the oxygen-evolving complex. It may also provide a ligand for a Cl- that is required for oxygen evolution. PSII binds additional chlorophylls, carotenoids and specific lipids. as cofactor.

The protein resides in the plastid. It localises to the chloroplast thylakoid membrane. Functionally, one of the components of the core complex of photosystem II (PSII). It binds chlorophyll and helps catalyze the primary light-induced photochemical processes of PSII. PSII is a light-driven water:plastoquinone oxidoreductase, using light energy to abstract electrons from H(2)O, generating O(2) and a proton gradient subsequently used for ATP formation. This is Photosystem II CP43 reaction center protein from Phaseolus vulgaris (Kidney bean).